A 145-amino-acid polypeptide reads, in one-letter code: Ribonuclease VapC7 (145 aa).

One can recognise a PINc domain in the interval 2 to 129 (IVLDTTVLVY…PAFADLSDVV (128 aa)). 2 residues coordinate Mg(2+): Asp5 and Asp100.

It belongs to the PINc/VapC protein family. Requires Mg(2+) as cofactor.

Functionally, toxic component of a type II toxin-antitoxin (TA) system. An RNase. The cognate antitoxin is VapB7. This chain is Ribonuclease VapC7, found in Mycobacterium tuberculosis (strain ATCC 25618 / H37Rv).